The sequence spans 193 residues: uncharacterized protein (193 aa).

Residues 153-170 (WRYWAVIALIAAVLIYLY) form a helical membrane-spanning segment.

Its subcellular location is the membrane. This is an uncharacterized protein from Invertebrate iridescent virus 6 (IIV-6).